Here is a 525-residue protein sequence, read N- to C-terminus: Protein nucleotidyltransferase YdiU (525 aa).

ATP is bound by residues G107, G109, R110, K129, D141, G142, R192, and R199. The active-site Proton acceptor is D268. N269 and D278 together coordinate Mg(2+). An ATP-binding site is contributed by D278.

It belongs to the SELO family. Requires Mg(2+) as cofactor. Mn(2+) is required as a cofactor.

The enzyme catalyses L-seryl-[protein] + ATP = 3-O-(5'-adenylyl)-L-seryl-[protein] + diphosphate. It carries out the reaction L-threonyl-[protein] + ATP = 3-O-(5'-adenylyl)-L-threonyl-[protein] + diphosphate. The catalysed reaction is L-tyrosyl-[protein] + ATP = O-(5'-adenylyl)-L-tyrosyl-[protein] + diphosphate. It catalyses the reaction L-histidyl-[protein] + UTP = N(tele)-(5'-uridylyl)-L-histidyl-[protein] + diphosphate. The enzyme catalyses L-seryl-[protein] + UTP = O-(5'-uridylyl)-L-seryl-[protein] + diphosphate. It carries out the reaction L-tyrosyl-[protein] + UTP = O-(5'-uridylyl)-L-tyrosyl-[protein] + diphosphate. In terms of biological role, nucleotidyltransferase involved in the post-translational modification of proteins. It can catalyze the addition of adenosine monophosphate (AMP) or uridine monophosphate (UMP) to a protein, resulting in modifications known as AMPylation and UMPylation. The sequence is that of Protein nucleotidyltransferase YdiU from Ralstonia nicotianae (strain ATCC BAA-1114 / GMI1000) (Ralstonia solanacearum).